We begin with the raw amino-acid sequence, 115 residues long: Large ribosomal subunit protein bL19 (115 aa).

It belongs to the bacterial ribosomal protein bL19 family.

Its function is as follows. This protein is located at the 30S-50S ribosomal subunit interface and may play a role in the structure and function of the aminoacyl-tRNA binding site. The polypeptide is Large ribosomal subunit protein bL19 (Lachnospira eligens (strain ATCC 27750 / DSM 3376 / VPI C15-48 / C15-B4) (Eubacterium eligens)).